The sequence spans 169 residues: uncharacterized protein (169 aa).

This sequence to M.tuberculosis Rv1480.

This is an uncharacterized protein from Mycobacterium avium.